Consider the following 214-residue polypeptide: tRNA (guanine-N(7)-)-methyltransferase (214 aa).

Residues Glu43, Glu68, Asp95, and Asp117 each contribute to the S-adenosyl-L-methionine site. The active site involves Asp117. Residues Lys121, Asp153, and 190–193 contribute to the substrate site; that span reads TEYE.

This sequence belongs to the class I-like SAM-binding methyltransferase superfamily. TrmB family.

It catalyses the reaction guanosine(46) in tRNA + S-adenosyl-L-methionine = N(7)-methylguanosine(46) in tRNA + S-adenosyl-L-homocysteine. It functions in the pathway tRNA modification; N(7)-methylguanine-tRNA biosynthesis. Catalyzes the formation of N(7)-methylguanine at position 46 (m7G46) in tRNA. The chain is tRNA (guanine-N(7)-)-methyltransferase from Staphylococcus haemolyticus (strain JCSC1435).